Consider the following 412-residue polypeptide: NADH-ubiquinone oxidoreductase 49 kDa subunit (412 aa).

It belongs to the complex I 49 kDa subunit family.

It localises to the hydrogenosome. It carries out the reaction a ubiquinone + NADH + 5 H(+)(in) = a ubiquinol + NAD(+) + 4 H(+)(out). Functionally, transfer of electrons from NADH to the respiratory chain. The immediate electron acceptor for the enzyme is believed to be ubiquinone. Component of the iron-sulfur (IP) fragment of the enzyme. The protein is NADH-ubiquinone oxidoreductase 49 kDa subunit (nad7) of Nyctotherus ovalis.